The chain runs to 1659 residues: eIF-2-alpha kinase GCN2 (1659 aa).

Residues 17–128 (NELEAIRSIY…SFTQEKLDEF (112 aa)) form the RWD domain. The disordered stretch occupies residues 149 to 170 (KEQLEKEEREKQQETIKKRSDE). Protein kinase domains are found at residues 256-527 (LVKP…MKFL) and 599-981 (FEEI…SGWL). Residues 605-613 (LGQGAFGQV) and Lys-628 each bind ATP. Disordered stretches follow at residues 671–691 (NVFE…DFEE) and 727–768 (FENS…VPRR). Ser-761 is subject to Phosphoserine. The active-site Proton acceptor is Asp-835. Residues Thr-882 and Thr-887 each carry the phosphothreonine; by autocatalysis modification. A histidyl-tRNA synthetase-like region spans residues 999 to 1519 (NPSSPWQQQV…EFKRWDENSS (521 aa)).

It belongs to the protein kinase superfamily. Ser/Thr protein kinase family. GCN2 subfamily. Homodimer; homodimerization is important for kinase activation by uncharged tRNAs. Interacts (via N-terminal RWD domain) with GCN1 (via N- and C-terminus); this interaction stimulates GCN2 kinase activity in a GCN20-dependent manner in response to amino acid starvation. Interacts (via N-terminus) with the GCN1-GCN20 complex on translating ribosomes in amino acid-starved cells; GCN1 may bind near the ribosomal A-site and promotes the transfer of uncharged tRNAs from the A-site to the tRNA-binding domain in GCN2 for its subsequent kinase activation, and hence allowing GCN4 translational activation and derepression of amino acid biosynthetic genes. Interacts (via C-terminus) with TIF11; this interaction is direct, occurs in amino acid-repleted cells, may be stabilized in a ribosome-dependent manner, reduces GCN2-mediated eIF-2-alpha phosphorylation but not GCN2 autophosphorylation and is lost in amino acid-starved cells and by uncharged tRNAs. Associates (via C-terminus) with ribosomes. Mg(2+) is required as a cofactor. Autophosphorylated, autophosphorylation on Thr-882 and Thr-887 increases kinase activity.

Its subcellular location is the cytoplasm. The enzyme catalyses L-seryl-[protein] + ATP = O-phospho-L-seryl-[protein] + ADP + H(+). The catalysed reaction is L-threonyl-[protein] + ATP = O-phospho-L-threonyl-[protein] + ADP + H(+). Its activity is regulated as follows. The integrated stress response (ISR) is activated in response to conditions that promote ribosome collisions: GCN1, which acts as a ribosome collision sensor, activates GCN2. The RQC pathway and the integrated stress response (ISR) antagonize each other: HEL2 prevents the activation of GCN2, while GCN2 suppresses RQC activation. Ribosome stalling-induced integrated stress response prefers ribosomes with empty A sites. The kinase activity is stimulated upon binding to uncharged tRNAs. In terms of biological role, metabolic-stress sensing protein kinase that phosphorylates the alpha subunit of eukaryotic translation initiation factor 2 (eIF-2-alpha/SUI2) on 'Ser-52' in response to low amino acid, carbon, or purine availability. Required for adapatation to nutrient starvation by acting as a key component of the integrated stress response (ISR), by which cells alter their translational and transcriptional output in response to starvation. Converts phosphorylated eIF-2-alpha/SUI2 either to a competitive inhibitor of translation initiation factor eIF-2B, leading to a global protein synthesis repression, and thus to a reduced overall utilization of amino acids, or to a translational initiation activation of specific mRNAs, such as the transcriptional activator GCN4, and hence allowing GCN4-mediated reprogramming of transcription to alleviate nutrient depletion. Binds uncharged tRNAs. Binds to aminoacylated tRNA(Phe) less tightly than to deacylated tRNA(Phe). Binds to double-stranded RNA. This chain is eIF-2-alpha kinase GCN2, found in Saccharomyces cerevisiae (strain ATCC 204508 / S288c) (Baker's yeast).